A 437-amino-acid chain; its full sequence is Zinc finger protein 491 (437 aa).

The segment at K35–D59 adopts a C2H2-type 1; degenerate zinc-finger fold. Residues F103–H125 form a C2H2-type 2; degenerate zinc finger. C2H2-type zinc fingers lie at residues Y131–H153, Y159–H181, Y187–H209, Y215–H237, Y243–H265, H271–H293, Y299–H321, D327–H349, Y355–H377, Y383–H405, and Y411–H433.

Belongs to the krueppel C2H2-type zinc-finger protein family.

Its subcellular location is the nucleus. May be involved in transcriptional regulation. The chain is Zinc finger protein 491 (ZNF491) from Homo sapiens (Human).